The primary structure comprises 423 residues: UDP-N-acetylglucosamine 1-carboxyvinyltransferase (423 aa).

Phosphoenolpyruvate is bound at residue 22–23 (KN). R93 contacts UDP-N-acetyl-alpha-D-glucosamine. The Proton donor role is filled by C117. 2-(S-cysteinyl)pyruvic acid O-phosphothioketal is present on C117. Residues 122–126 (RPIDL), D307, and V329 each bind UDP-N-acetyl-alpha-D-glucosamine.

It belongs to the EPSP synthase family. MurA subfamily.

Its subcellular location is the cytoplasm. It carries out the reaction phosphoenolpyruvate + UDP-N-acetyl-alpha-D-glucosamine = UDP-N-acetyl-3-O-(1-carboxyvinyl)-alpha-D-glucosamine + phosphate. It participates in cell wall biogenesis; peptidoglycan biosynthesis. Its function is as follows. Cell wall formation. Adds enolpyruvyl to UDP-N-acetylglucosamine. The chain is UDP-N-acetylglucosamine 1-carboxyvinyltransferase from Chlorobium chlorochromatii (strain CaD3).